The primary structure comprises 512 residues: 2-isopropylmalate synthase (512 aa).

The Pyruvate carboxyltransferase domain maps to 5-267 (VVIFDTTLRD…ETSINKSEIY (263 aa)). D14, H202, H204, and N238 together coordinate Mn(2+). A regulatory domain region spans residues 391–512 (SLEYLHITSG…LPKAKTERAV (122 aa)).

It belongs to the alpha-IPM synthase/homocitrate synthase family. LeuA type 1 subfamily. Homodimer. Requires Mn(2+) as cofactor.

The protein localises to the cytoplasm. It catalyses the reaction 3-methyl-2-oxobutanoate + acetyl-CoA + H2O = (2S)-2-isopropylmalate + CoA + H(+). Its pathway is amino-acid biosynthesis; L-leucine biosynthesis; L-leucine from 3-methyl-2-oxobutanoate: step 1/4. Functionally, catalyzes the condensation of the acetyl group of acetyl-CoA with 3-methyl-2-oxobutanoate (2-ketoisovalerate) to form 3-carboxy-3-hydroxy-4-methylpentanoate (2-isopropylmalate). This Heliobacterium modesticaldum (strain ATCC 51547 / Ice1) protein is 2-isopropylmalate synthase.